A 275-amino-acid chain; its full sequence is 3-methyl-2-oxobutanoate hydroxymethyltransferase (275 aa).

The Mg(2+) site is built by Asp-44 and Asp-83. Residues 44–45, Asp-83, and Lys-113 contribute to the 3-methyl-2-oxobutanoate site; that span reads DS. Position 115 (Glu-115) interacts with Mg(2+). Glu-182 functions as the Proton acceptor in the catalytic mechanism.

This sequence belongs to the PanB family. Homodecamer; pentamer of dimers. Mg(2+) is required as a cofactor.

It localises to the cytoplasm. The enzyme catalyses 3-methyl-2-oxobutanoate + (6R)-5,10-methylene-5,6,7,8-tetrahydrofolate + H2O = 2-dehydropantoate + (6S)-5,6,7,8-tetrahydrofolate. The protein operates within cofactor biosynthesis; (R)-pantothenate biosynthesis; (R)-pantoate from 3-methyl-2-oxobutanoate: step 1/2. In terms of biological role, catalyzes the reversible reaction in which hydroxymethyl group from 5,10-methylenetetrahydrofolate is transferred onto alpha-ketoisovalerate to form ketopantoate. The chain is 3-methyl-2-oxobutanoate hydroxymethyltransferase from Enterococcus faecalis (strain ATCC 700802 / V583).